Here is a 565-residue protein sequence, read N- to C-terminus: Sulfite reductase [NADPH] hemoprotein beta-component (565 aa).

Cys429, Cys435, Cys474, and Cys478 together coordinate [4Fe-4S] cluster. Residue Cys478 coordinates siroheme.

Belongs to the nitrite and sulfite reductase 4Fe-4S domain family. In terms of assembly, alpha(8)-beta(8). The alpha component is a flavoprotein, the beta component is a hemoprotein. The cofactor is siroheme. [4Fe-4S] cluster serves as cofactor.

The catalysed reaction is hydrogen sulfide + 3 NADP(+) + 3 H2O = sulfite + 3 NADPH + 4 H(+). The protein operates within sulfur metabolism; hydrogen sulfide biosynthesis; hydrogen sulfide from sulfite (NADPH route): step 1/1. Its function is as follows. Component of the sulfite reductase complex that catalyzes the 6-electron reduction of sulfite to sulfide. This is one of several activities required for the biosynthesis of L-cysteine from sulfate. In Shewanella halifaxensis (strain HAW-EB4), this protein is Sulfite reductase [NADPH] hemoprotein beta-component.